A 178-amino-acid polypeptide reads, in one-letter code: Glutamyl-tRNA(Gln) amidotransferase subunit C, mitochondrial (178 aa).

The N-terminal 31 residues, 1–31 (MFRHIFTLGPRSISAITVRSRRALSSTAKPV), are a transit peptide targeting the mitochondrion. Residues 26 to 67 (STAKPVSAPVTSDDRPNLDVKHLKHPTKVPQQPHKSDIDRRQ) are disordered. Positions 37–46 (SDDRPNLDVK) are enriched in basic and acidic residues.

Belongs to the GatC family. As to quaternary structure, subunit of the heterotrimeric GatCAB amidotransferase (AdT) complex, composed of A, B and C subunits.

The protein resides in the mitochondrion. The enzyme catalyses L-glutamyl-tRNA(Gln) + L-glutamine + ATP + H2O = L-glutaminyl-tRNA(Gln) + L-glutamate + ADP + phosphate + H(+). In terms of biological role, allows the formation of correctly charged Gln-tRNA(Gln) through the transamidation of misacylated Glu-tRNA(Gln) in the mitochondria. The reaction takes place in the presence of glutamine and ATP through an activated gamma-phospho-Glu-tRNA(Gln). The chain is Glutamyl-tRNA(Gln) amidotransferase subunit C, mitochondrial from Aedes aegypti (Yellowfever mosquito).